The following is a 254-amino-acid chain: NH(3)-dependent NAD(+) synthetase (254 aa).

32 to 39 (GISGGIDS) serves as a coordination point for ATP. Asp38 provides a ligand contact to Mg(2+). Arg113 lines the deamido-NAD(+) pocket. Position 133 (Thr133) interacts with ATP. A Mg(2+)-binding site is contributed by Glu138. Deamido-NAD(+) is bound by residues Lys146 and Asp153. Lys162 and Thr184 together coordinate ATP. 244 to 245 (HK) contacts deamido-NAD(+).

Belongs to the NAD synthetase family. As to quaternary structure, homodimer.

The enzyme catalyses deamido-NAD(+) + NH4(+) + ATP = AMP + diphosphate + NAD(+) + H(+). The protein operates within cofactor biosynthesis; NAD(+) biosynthesis; NAD(+) from deamido-NAD(+) (ammonia route): step 1/1. Catalyzes the ATP-dependent amidation of deamido-NAD to form NAD. Uses ammonia as a nitrogen source. The sequence is that of NH(3)-dependent NAD(+) synthetase from Thermococcus kodakarensis (strain ATCC BAA-918 / JCM 12380 / KOD1) (Pyrococcus kodakaraensis (strain KOD1)).